The chain runs to 49 residues: MRNIIILACTECKQKNYTTTKNKRTMQGRFEIKKYCRFCRSHKLHRETK.

This sequence belongs to the bacterial ribosomal protein bL33 family.

This Syntrophus aciditrophicus (strain SB) protein is Large ribosomal subunit protein bL33.